Reading from the N-terminus, the 249-residue chain is ATP synthase subunit a (249 aa).

The next 6 helical transmembrane spans lie at 29 to 49, 84 to 104, 114 to 134, 140 to 160, 193 to 213, and 216 to 236; these read ASLF…FATS, FFPF…LGMF, IIVT…YGFY, FFGI…VASI, FVAS…LPLI, and VAMT…FAVL.

The protein belongs to the ATPase A chain family. In terms of assembly, F-type ATPases have 2 components, CF(1) - the catalytic core - and CF(0) - the membrane proton channel. CF(1) has five subunits: alpha(3), beta(3), gamma(1), delta(1), epsilon(1). CF(0) has three main subunits: a(1), b(2) and c(9-12). The alpha and beta chains form an alternating ring which encloses part of the gamma chain. CF(1) is attached to CF(0) by a central stalk formed by the gamma and epsilon chains, while a peripheral stalk is formed by the delta and b chains.

It localises to the cell inner membrane. Key component of the proton channel; it plays a direct role in the translocation of protons across the membrane. The sequence is that of ATP synthase subunit a from Agrobacterium fabrum (strain C58 / ATCC 33970) (Agrobacterium tumefaciens (strain C58)).